We begin with the raw amino-acid sequence, 340 residues long: Coproporphyrin III ferrochelatase (340 aa).

2 residues coordinate Fe-coproporphyrin III: S52 and Y116. Residues H172 and E255 each coordinate Fe(2+).

This sequence belongs to the ferrochelatase family.

The protein localises to the cytoplasm. The enzyme catalyses Fe-coproporphyrin III + 2 H(+) = coproporphyrin III + Fe(2+). Its pathway is porphyrin-containing compound metabolism; protoheme biosynthesis. In terms of biological role, involved in coproporphyrin-dependent heme b biosynthesis. Catalyzes the insertion of ferrous iron into coproporphyrin III to form Fe-coproporphyrin III. The sequence is that of Coproporphyrin III ferrochelatase from Mycobacterium ulcerans (strain Agy99).